We begin with the raw amino-acid sequence, 287 residues long: Large ribosomal subunit protein uL2 (287 aa).

The disordered stretch occupies residues 221–287 (RGSVMNPCDH…SKRSRGGRDS (67 aa)). Residues 258-287 (KTRKRNKPSNRFVLRKRRRTSKRSRGGRDS) show a composition bias toward basic residues.

Belongs to the universal ribosomal protein uL2 family. As to quaternary structure, part of the 50S ribosomal subunit. Forms a bridge to the 30S subunit in the 70S ribosome.

Its function is as follows. One of the primary rRNA binding proteins. Required for association of the 30S and 50S subunits to form the 70S ribosome, for tRNA binding and peptide bond formation. It has been suggested to have peptidyltransferase activity; this is somewhat controversial. Makes several contacts with the 16S rRNA in the 70S ribosome. The protein is Large ribosomal subunit protein uL2 of Prochlorococcus marinus (strain MIT 9303).